The following is a 355-amino-acid chain: Alanine racemase (355 aa).

Catalysis depends on Lys34, which acts as the Proton acceptor; specific for D-alanine. Lys34 carries the post-translational modification N6-(pyridoxal phosphate)lysine. Arg133 is a binding site for substrate. The active-site Proton acceptor; specific for L-alanine is Tyr249. Met297 is a binding site for substrate.

Belongs to the alanine racemase family. It depends on pyridoxal 5'-phosphate as a cofactor.

It carries out the reaction L-alanine = D-alanine. It participates in amino-acid biosynthesis; D-alanine biosynthesis; D-alanine from L-alanine: step 1/1. Catalyzes the interconversion of L-alanine and D-alanine. May also act on other amino acids. The sequence is that of Alanine racemase (alr) from Rickettsia peacockii (strain Rustic).